We begin with the raw amino-acid sequence, 706 residues long: Polyribonucleotide nucleotidyltransferase (706 aa).

Mg(2+) is bound by residues Asp-485 and Asp-491. In terms of domain architecture, KH spans 552-611 (PRMLKMKIHPDKIREVIGSGGKTINKIIEDTGVKIDIENDGTIFIAAQTQEAGELALSII). Residues 621–689 (GDIFKGKVIK…QQGKVSLSRK (69 aa)) enclose the S1 motif domain.

It belongs to the polyribonucleotide nucleotidyltransferase family. Mg(2+) serves as cofactor.

It is found in the cytoplasm. The catalysed reaction is RNA(n+1) + phosphate = RNA(n) + a ribonucleoside 5'-diphosphate. Functionally, involved in mRNA degradation. Catalyzes the phosphorolysis of single-stranded polyribonucleotides processively in the 3'- to 5'-direction. The protein is Polyribonucleotide nucleotidyltransferase of Alkaliphilus oremlandii (strain OhILAs) (Clostridium oremlandii (strain OhILAs)).